A 1185-amino-acid polypeptide reads, in one-letter code: 1-phosphatidylinositol 4,5-bisphosphate phosphodiesterase beta-2 (1185 aa).

In terms of domain architecture, PI-PLC X-box spans 312–463; sequence HDMTQPLNHY…LRGKILIKNK (152 aa). The active site involves H327. Residues N328, E357, and D359 each contribute to the Ca(2+) site. H374 is a catalytic residue. E408 contacts Ca(2+). A disordered region spans residues 460–533; the sequence is IKNKKNQFSG…EEIKKMQSDE (74 aa). A compositionally biased stretch (polar residues) spans 465–476; the sequence is NQFSGPTSSSKD. Residues 501 to 524 show a composition bias toward acidic residues; the sequence is EGTELEEEEVEEEEEEESGNLDEE. A PI-PLC Y-box domain is found at 546 to 662; the sequence is MSSLVNYIQP…GYLLKHEFMR (117 aa). The C2 domain maps to 662-790; sequence RRPDKQFNPF…CLHSESNMPL (129 aa). Disordered stretches follow at residues 859 to 888 and 943 to 979; these read LAPTSNGSPAARAGAREEAMKEAAEPRTAS and GACKLGPGKGSRKKRSLPREESAGAAPGEGPEGVDGR. The span at 872-888 shows a compositional bias: basic and acidic residues; that stretch reads GAREEAMKEAAEPRTAS. S953 is subject to Phosphoserine. Residues 988–1147 adopt a coiled-coil conformation; that stretch reads ELELLRQGEE…VKESVRACLR (160 aa).

In terms of assembly, interacts with RAC1. Forms a complex composed of at least WDR26, a G-beta:gamma unit, and PLCB2. It depends on Ca(2+) as a cofactor.

It carries out the reaction a 1,2-diacyl-sn-glycero-3-phospho-(1D-myo-inositol-4,5-bisphosphate) + H2O = 1D-myo-inositol 1,4,5-trisphosphate + a 1,2-diacyl-sn-glycerol + H(+). The catalysed reaction is a 1,2-diacyl-sn-glycero-3-phospho-(1D-myo-inositol) + H2O = 1D-myo-inositol 1-phosphate + a 1,2-diacyl-sn-glycerol + H(+). In terms of biological role, the production of the second messenger molecules diacylglycerol (DAG) and inositol 1,4,5-trisphosphate (IP3) is mediated by activated phosphatidylinositol-specific phospholipase C enzymes. In neutrophils, participates in a phospholipase C-activating N-formyl peptide-activated GPCR (G protein-coupled receptor) signaling pathway by promoting RASGRP4 activation by DAG, to promote neutrophil functional responses. This chain is 1-phosphatidylinositol 4,5-bisphosphate phosphodiesterase beta-2, found in Homo sapiens (Human).